A 154-amino-acid chain; its full sequence is Peptide methionine sulfoxide reductase MsrB (154 aa).

The MsrB domain occupies 28 to 150 (DQQWREQLSE…NSVSLIFNKI (123 aa)). Positions 67, 70, 116, and 119 each coordinate Zn(2+). Residue Cys139 is the Nucleophile of the active site.

Belongs to the MsrB Met sulfoxide reductase family. It depends on Zn(2+) as a cofactor.

The enzyme catalyses L-methionyl-[protein] + [thioredoxin]-disulfide + H2O = L-methionyl-(R)-S-oxide-[protein] + [thioredoxin]-dithiol. This Vibrio vulnificus (strain YJ016) protein is Peptide methionine sulfoxide reductase MsrB.